The primary structure comprises 270 residues: Acyl-[acyl-carrier-protein]--UDP-N-acetylglucosamine O-acyltransferase (270 aa).

Belongs to the transferase hexapeptide repeat family. LpxA subfamily. Homotrimer.

Its subcellular location is the cytoplasm. It catalyses the reaction a (3R)-hydroxyacyl-[ACP] + UDP-N-acetyl-alpha-D-glucosamine = a UDP-3-O-[(3R)-3-hydroxyacyl]-N-acetyl-alpha-D-glucosamine + holo-[ACP]. It functions in the pathway glycolipid biosynthesis; lipid IV(A) biosynthesis; lipid IV(A) from (3R)-3-hydroxytetradecanoyl-[acyl-carrier-protein] and UDP-N-acetyl-alpha-D-glucosamine: step 1/6. Its function is as follows. Involved in the biosynthesis of lipid A, a phosphorylated glycolipid that anchors the lipopolysaccharide to the outer membrane of the cell. This is Acyl-[acyl-carrier-protein]--UDP-N-acetylglucosamine O-acyltransferase from Helicobacter pylori (strain J99 / ATCC 700824) (Campylobacter pylori J99).